We begin with the raw amino-acid sequence, 134 residues long: Small ribosomal subunit protein uS11 (134 aa).

Positions 1 to 21 are disordered; sequence MPPKSRQGAGRKVRRKEKKNV. The segment covering 9 to 21 has biased composition (basic residues); that stretch reads AGRKVRRKEKKNV.

This sequence belongs to the universal ribosomal protein uS11 family. As to quaternary structure, part of the 30S ribosomal subunit. Interacts with proteins S7 and S18. Binds to IF-3.

Its function is as follows. Located on the platform of the 30S subunit, it bridges several disparate RNA helices of the 16S rRNA. Forms part of the Shine-Dalgarno cleft in the 70S ribosome. The chain is Small ribosomal subunit protein uS11 from Thermobifida fusca (strain YX).